The chain runs to 105 residues: Cuticle protein AMP2 (105 aa).

Positions 1-21 are disordered; the sequence is DRDAQTLTDERSDQGDGNFRY. Residues 16–81 enclose the Chitin-binding type R&amp;R domain; it reads DGNFRYEFET…PSSDLLPVGP (66 aa).

In terms of tissue distribution, arthrodial membrane.

The sequence is that of Cuticle protein AMP2 from Homarus americanus (American lobster).